A 97-amino-acid polypeptide reads, in one-letter code: Venom peptide HsVx1 (97 aa).

A signal peptide spans 1–20; it reads MSHLRIAVTFLCTLFALTAG.

It belongs to the scorpion La1-like peptide family. Contains 4 disulfide bonds. As to expression, expressed by the venom gland.

It is found in the secreted. In Heterometrus spinifer (Asia giant forest scorpion), this protein is Venom peptide HsVx1.